The sequence spans 278 residues: Protein irg-2 (278 aa).

Residues 152–179 (NSIRGQPFKSLQPENRTPTQVTGHQQES) are disordered. Polar residues predominate over residues 163 to 179 (QPENRTPTQVTGHQQES).

In terms of biological role, plays a role in innate immunity by conferring resistance to virulent strains of the Gram-negative bacterium P.aeruginosa via the zip-2 pathway and independent of the pmk-1 p38MAPK pathway. Induced as part of several immune responses to translational inhibition arising from endocytosis of ToxA during P.aeruginosa infection or exposure to exogenous cycloheximide. This chain is Protein irg-2, found in Caenorhabditis elegans.